The following is a 411-amino-acid chain: MVTVIDPQLAGVSGNMMVGALIDLGAHPERTAEVMEDAASHFGGADVSVSEVKRAGLRATYVDVRADESLSVGYLEFLRLLEGISHPALDDEMLSMARAVFHTIAQAEASVHGVKLDEVHFHEVGAADAVADVMGAVFAYFDLNLHRDEVYTLPVAVGGGLVRGAHGLTPVPAPATTEILRGFPVTGGPSGVELATPTGSALLVNMVREHRRFFPPMEIQATGYGAGSMDPEFPNILRIVRGSGQVPHDTVTLLETNVDHLSGEVLGNIFERLLEAGALDVTLTPVIMKKNRPGQLIRVICRENEYERILEHLFSETGTLGVRIFPQVHRGVLERRIMEAEVDIKGRRTARFKVGLMGSRVVNARIEYEDARRISLETGIPLRDVIEMSEKQFRDLKFKADQENDGSGGLK.

It belongs to the LarC family.

The polypeptide is Putative nickel insertion protein (Methanothermobacter thermautotrophicus (strain ATCC 29096 / DSM 1053 / JCM 10044 / NBRC 100330 / Delta H) (Methanobacterium thermoautotrophicum)).